A 319-amino-acid polypeptide reads, in one-letter code: Coproporphyrin III ferrochelatase 2 (319 aa).

Residues Y13, R30, 46–47 (RY), S54, and Y125 each bind Fe-coproporphyrin III. H181 and E262 together coordinate Fe(2+).

This sequence belongs to the ferrochelatase family.

It localises to the cytoplasm. It catalyses the reaction Fe-coproporphyrin III + 2 H(+) = coproporphyrin III + Fe(2+). The protein operates within porphyrin-containing compound metabolism; protoheme biosynthesis. Involved in coproporphyrin-dependent heme b biosynthesis. Catalyzes the insertion of ferrous iron into coproporphyrin III to form Fe-coproporphyrin III. The sequence is that of Coproporphyrin III ferrochelatase 2 from Bacillus cereus (strain ATCC 14579 / DSM 31 / CCUG 7414 / JCM 2152 / NBRC 15305 / NCIMB 9373 / NCTC 2599 / NRRL B-3711).